A 464-amino-acid polypeptide reads, in one-letter code: Siroheme synthase (464 aa).

The segment at 1-203 (MDYLPLFHNL…GQETEAERLL (203 aa)) is precorrin-2 dehydrogenase /sirohydrochlorin ferrochelatase. NAD(+) contacts are provided by residues 22-23 (EI) and 43-44 (PQ). Ser128 carries the phosphoserine modification. The tract at residues 216 to 464 (GEVYLVGAGP…AWFEGRQSAD (249 aa)) is uroporphyrinogen-III C-methyltransferase. Pro225 is an S-adenosyl-L-methionine binding site. The active-site Proton acceptor is the Asp248. Lys270 (proton donor) is an active-site residue. S-adenosyl-L-methionine is bound by residues 301 to 303 (GGD), Ile306, 331 to 332 (TA), Met383, and Gly412.

It in the N-terminal section; belongs to the precorrin-2 dehydrogenase / sirohydrochlorin ferrochelatase family. In the C-terminal section; belongs to the precorrin methyltransferase family.

It carries out the reaction uroporphyrinogen III + 2 S-adenosyl-L-methionine = precorrin-2 + 2 S-adenosyl-L-homocysteine + H(+). It catalyses the reaction precorrin-2 + NAD(+) = sirohydrochlorin + NADH + 2 H(+). The enzyme catalyses siroheme + 2 H(+) = sirohydrochlorin + Fe(2+). The protein operates within cofactor biosynthesis; adenosylcobalamin biosynthesis; precorrin-2 from uroporphyrinogen III: step 1/1. It functions in the pathway cofactor biosynthesis; adenosylcobalamin biosynthesis; sirohydrochlorin from precorrin-2: step 1/1. It participates in porphyrin-containing compound metabolism; siroheme biosynthesis; precorrin-2 from uroporphyrinogen III: step 1/1. Its pathway is porphyrin-containing compound metabolism; siroheme biosynthesis; siroheme from sirohydrochlorin: step 1/1. The protein operates within porphyrin-containing compound metabolism; siroheme biosynthesis; sirohydrochlorin from precorrin-2: step 1/1. Multifunctional enzyme that catalyzes the SAM-dependent methylations of uroporphyrinogen III at position C-2 and C-7 to form precorrin-2 via precorrin-1. Then it catalyzes the NAD-dependent ring dehydrogenation of precorrin-2 to yield sirohydrochlorin. Finally, it catalyzes the ferrochelation of sirohydrochlorin to yield siroheme. This Azotobacter vinelandii (strain DJ / ATCC BAA-1303) protein is Siroheme synthase.